We begin with the raw amino-acid sequence, 288 residues long: Pantothenate synthetase (288 aa).

Position 30 to 37 (30 to 37 (MGFLHEGH)) interacts with ATP. Catalysis depends on His37, which acts as the Proton donor. Gln61 provides a ligand contact to (R)-pantoate. Gln61 serves as a coordination point for beta-alanine. 147 to 150 (GMKD) is an ATP binding site. Gln153 contributes to the (R)-pantoate binding site. 184 to 187 (KSSR) provides a ligand contact to ATP.

It belongs to the pantothenate synthetase family. In terms of assembly, homodimer.

The protein localises to the cytoplasm. The enzyme catalyses (R)-pantoate + beta-alanine + ATP = (R)-pantothenate + AMP + diphosphate + H(+). It functions in the pathway cofactor biosynthesis; (R)-pantothenate biosynthesis; (R)-pantothenate from (R)-pantoate and beta-alanine: step 1/1. In terms of biological role, catalyzes the condensation of pantoate with beta-alanine in an ATP-dependent reaction via a pantoyl-adenylate intermediate. This is Pantothenate synthetase from Bacillus licheniformis (strain ATCC 14580 / DSM 13 / JCM 2505 / CCUG 7422 / NBRC 12200 / NCIMB 9375 / NCTC 10341 / NRRL NRS-1264 / Gibson 46).